A 147-amino-acid polypeptide reads, in one-letter code: Hemoglobin subunit epsilon (147 aa).

Residues H3–H147 form the Globin domain. At S51 the chain carries Phosphoserine. Heme b is bound by residues H64 and H93.

Belongs to the globin family. As to quaternary structure, heterotetramer of two alpha chains and two epsilon chains in early embryonic hemoglobin Gower-2; two zeta chains and two epsilon chains in early embryonic hemoglobin Gower-1. In terms of tissue distribution, red blood cells.

Its function is as follows. The epsilon chain is a beta-type chain of early mammalian embryonic hemoglobin. This is Hemoglobin subunit epsilon (HBE1) from Sminthopsis crassicaudata (Fat-tailed dunnart).